The following is a 139-amino-acid chain: Transcription initiation factor IIA small chain homolog (139 aa).

Residues L113–D139 form a disordered region.

Belongs to the TFIIA subunit 2 family.

It localises to the nucleus. This chain is Transcription initiation factor IIA small chain homolog, found in Caenorhabditis elegans.